A 262-amino-acid chain; its full sequence is Small ribosomal subunit protein eS1 (262 aa).

The protein belongs to the eukaryotic ribosomal protein eS1 family. In terms of assembly, component of the small ribosomal subunit. Mature ribosomes consist of a small (40S) and a large (60S) subunit. The 40S subunit contains about 33 different proteins and 1 molecule of RNA (18S). The 60S subunit contains about 49 different proteins and 3 molecules of RNA (25S, 5.8S and 5S).

It localises to the cytoplasm. This Plasmodium vivax (strain Salvador I) protein is Small ribosomal subunit protein eS1.